The following is a 449-amino-acid chain: Phosphoglucosamine mutase (449 aa).

The active-site Phosphoserine intermediate is serine 99. Mg(2+)-binding residues include serine 99, aspartate 239, aspartate 241, and aspartate 243. Serine 99 is subject to Phosphoserine.

It belongs to the phosphohexose mutase family. The cofactor is Mg(2+). Post-translationally, activated by phosphorylation.

The enzyme catalyses alpha-D-glucosamine 1-phosphate = D-glucosamine 6-phosphate. In terms of biological role, catalyzes the conversion of glucosamine-6-phosphate to glucosamine-1-phosphate. The polypeptide is Phosphoglucosamine mutase (Finegoldia magna (strain ATCC 29328 / DSM 20472 / WAL 2508) (Peptostreptococcus magnus)).